The chain runs to 157 residues: Large ribosomal subunit protein uL15 (157 aa).

The protein belongs to the universal ribosomal protein uL15 family. Part of the 50S ribosomal subunit.

Functionally, binds to the 23S rRNA. In Ehrlichia ruminantium (strain Welgevonden), this protein is Large ribosomal subunit protein uL15.